We begin with the raw amino-acid sequence, 339 residues long: Trace amine-associated receptor 2 (339 aa).

Residues 1-36 (MASFEAQQETFDCSEYGNGSCPENERSLGVRAAMYS) lie on the Extracellular side of the membrane. N-linked (GlcNAc...) asparagine glycosylation is present at Asn18. Intrachain disulfides connect Cys21–Cys185 and Cys104–Cys189. A helical transmembrane segment spans residues 37 to 57 (LMACAIFITIFGNLAMIISIS). At 58 to 67 (YFKQLHTPTN) the chain is on the cytoplasmic side. The helical transmembrane segment at 68 to 88 (LLILSMAVTDFLLGFTIMPYS) threads the bilayer. At 89–106 (MVRSVENCWYFGLTFCKI) the chain is on the extracellular side. The helical transmembrane segment at 107–127 (HYSFDLMLSITSIFHLCSVAV) threads the bilayer. The Cytoplasmic portion of the chain corresponds to 128–150 (DRFYAICHPLHYCTKMTIPVVRR). Residues 151–171 (LLLVCWSVPGAFAFGVVFSEA) form a helical membrane-spanning segment. The Extracellular portion of the chain corresponds to 172–195 (YADGIEGYDILVACSSSCPVMFNK). Residues 196-216 (LWGTTLFVAGFFTPSSMMVGI) form a helical membrane-spanning segment. Topologically, residues 217-251 (YGKIFAVSKKHARVIDNLPENQNNQMRKDKKAAKT) are cytoplasmic. A helical membrane pass occupies residues 252 to 272 (LGIVMGVFLLCWFPCFFTILL). At 273-287 (DPFLNFSTPAVLFDA) the chain is on the extracellular side. Residue Asn277 is glycosylated (N-linked (GlcNAc...) asparagine). The chain crosses the membrane as a helical span at residues 288 to 310 (LTWFGYFNSTCNPLIYGFFYPWF). Topologically, residues 311–339 (RRALKYILLGKIFSSHFHNTNLFTQKETE) are cytoplasmic.

Belongs to the G-protein coupled receptor 1 family. Mainly expressed in neurons of the olfactory epithelium. Also present in the limbic brain areas receiving projection from the olfactory system and several brain regions, including the hippocampus, cerebellum, cortex, raphe nuclei, hypothalamus and habenula.

The protein localises to the cell membrane. Orphan olfactory receptor specific for trace amines. Trace amine compounds are enriched in animal body fluids and act on trace amine-associated receptors (TAARs) to elicit both intraspecific and interspecific innate behaviors. Ligand-binding causes a conformation change that triggers signaling via the G(s)-class of G-proteins which activate adenylate cyclase. May also be required to provide olfactory input into limbic brain areas to regulate emotional behaviors likely via modulation of the dopamine system. This is Trace amine-associated receptor 2 from Mus musculus (Mouse).